A 134-amino-acid polypeptide reads, in one-letter code: Peptide methionine sulfoxide reductase MsrB (134 aa).

Residues 9 to 131 (DEYWRDKLDA…NSASIQLQKE (123 aa)) enclose the MsrB domain. Zn(2+) is bound by residues Cys48, Cys51, Cys97, and Cys100. The active-site Nucleophile is Cys120.

This sequence belongs to the MsrB Met sulfoxide reductase family. The cofactor is Zn(2+).

The enzyme catalyses L-methionyl-[protein] + [thioredoxin]-disulfide + H2O = L-methionyl-(R)-S-oxide-[protein] + [thioredoxin]-dithiol. This is Peptide methionine sulfoxide reductase MsrB from Saccharophagus degradans (strain 2-40 / ATCC 43961 / DSM 17024).